We begin with the raw amino-acid sequence, 470 residues long: Acetyl-CoA decarbonylase/synthase complex subunit beta 2 (470 aa).

[Ni-Fe-S] cluster is bound by residues cysteine 190, cysteine 193, cysteine 279, and cysteine 281.

Belongs to the CdhC family. Monomer. The ACDS complex is made up of alpha, epsilon, beta, gamma and delta chains with a probable stoichiometry of (alpha(2)epsilon(2))(4)-beta(8)-(gamma(1)delta(1))(8) (Potential). Requires [Ni-Fe-S] cluster as cofactor.

It catalyses the reaction Co(I)-[corrinoid Fe-S protein] + acetyl-CoA + H(+) = methyl-Co(III)-[corrinoid Fe-S protein] + CO + CoA. It participates in one-carbon metabolism; methanogenesis from acetate. In terms of biological role, part of a complex that catalyzes the reversible cleavage of acetyl-CoA, allowing growth on acetate as sole source of carbon and energy. The alpha-epsilon complex generates CO from CO(2), while the beta subunit (this protein) combines the CO with CoA and a methyl group to form acetyl-CoA. The methyl group, which is incorporated into acetyl-CoA, is transferred to the beta subunit by a corrinoid iron-sulfur protein (the gamma-delta complex). This Methanosarcina mazei (strain ATCC BAA-159 / DSM 3647 / Goe1 / Go1 / JCM 11833 / OCM 88) (Methanosarcina frisia) protein is Acetyl-CoA decarbonylase/synthase complex subunit beta 2 (cdhC2).